The following is a 157-amino-acid chain: Peptide methionine sulfoxide reductase MsrA (157 aa).

The active site involves Cys13.

It belongs to the MsrA Met sulfoxide reductase family.

It carries out the reaction L-methionyl-[protein] + [thioredoxin]-disulfide + H2O = L-methionyl-(S)-S-oxide-[protein] + [thioredoxin]-dithiol. It catalyses the reaction [thioredoxin]-disulfide + L-methionine + H2O = L-methionine (S)-S-oxide + [thioredoxin]-dithiol. Functionally, has an important function as a repair enzyme for proteins that have been inactivated by oxidation. Catalyzes the reversible oxidation-reduction of methionine sulfoxide in proteins to methionine. This chain is Peptide methionine sulfoxide reductase MsrA, found in Methanococcus maripaludis (strain C5 / ATCC BAA-1333).